Here is a 132-residue protein sequence, read N- to C-terminus: MTMTDPIADFLTRLRNANTAYHDEVKLPHSKIKANIAEILKREGYISDFRTEDAEVGKTLIVDLKYGPSRERSLAGVRRVSKPGLRVYAKSTNLPKVLGGLGVAIISTSSGLLTDRQAANQGVGGEVLAYVW.

This sequence belongs to the universal ribosomal protein uS8 family. In terms of assembly, part of the 30S ribosomal subunit. Contacts proteins S5 and S12.

In terms of biological role, one of the primary rRNA binding proteins, it binds directly to 16S rRNA central domain where it helps coordinate assembly of the platform of the 30S subunit. The protein is Small ribosomal subunit protein uS8 of Rhodococcus erythropolis (strain PR4 / NBRC 100887).